Here is a 326-residue protein sequence, read N- to C-terminus: MAFISFPPRHPSASARLPLTLIALDDWALATITGVDSEKYIQGQVTADVSQMTEQQHLLTAHCDAKGKMWSNLRLFREREGFVWIERRSVREAQLTELKKYAVFSKVVIAPDDDRVLLGVAGFQARAALANVFSDLPNSENQVVRDGASTLLWFEHPAERFLLVTDVATVNMLTEKLHGEAELNNSQQWLALDIEAGIPVIDAANSGQFIPQATNLQALGGISFKKGCYTGQEMVARAKFRGANKRALWLLAGKASRVPEAGEDLELQMGENWRRTGAILAATQLDDGQLLVQAVMNNDLETESVFRVRDDVNTLHIIPLPYSLEE.

Residues W27 and W189 each coordinate folate.

The protein belongs to the tRNA-modifying YgfZ family.

Its subcellular location is the cytoplasm. In terms of biological role, folate-binding protein involved in regulating the level of ATP-DnaA and in the modification of some tRNAs. It is probably a key factor in regulatory networks that act via tRNA modification, such as initiation of chromosomal replication. This is tRNA-modifying protein YgfZ from Salmonella arizonae (strain ATCC BAA-731 / CDC346-86 / RSK2980).